A 416-amino-acid chain; its full sequence is MSQIAILSVNHQLAPVEVREKVAFTPDKLTQALSDLHGIYGIYACIILSTCNRVEIYVNSDNENPKEVLSNYLAKIHNITRDRINPYLNYFEDNEALTHVCNVATGLDSLVLGEPQILGQLKNAYHMAKEAKTLNKLLEKLFQHAFSTAKKVRTDTQIGVSPVSIAYCSVKLSEKIFECLSEQTVLLIGAGEMIELCAQYLNKKKVSNMIIANRTIENAQKIANLYQAQSIGLKQFSSVIHKADIIISSTAASVPIIGKGLIESALKKRKHKPIFMLDIAIPRDIEPEVGQLDDIYLYTIDDLEQVINDNIGNREKEKNLAQEIIIKQNQVFNQWLKVLPNEQLVRSYRSNANLIKNKLLEKAIKQIKHSGDYENIIRKFADQLTNKLLHLPSKNIKQTSTDNLSQCEGCIPNIKK.

Substrate is bound by residues 50-53, Ser109, 114-116, and Gln120; these read TCNR and EPQ. Catalysis depends on Cys51, which acts as the Nucleophile. 189–194 contacts NADP(+); it reads GAGEMI.

This sequence belongs to the glutamyl-tRNA reductase family. As to quaternary structure, homodimer.

It catalyses the reaction (S)-4-amino-5-oxopentanoate + tRNA(Glu) + NADP(+) = L-glutamyl-tRNA(Glu) + NADPH + H(+). It functions in the pathway porphyrin-containing compound metabolism; protoporphyrin-IX biosynthesis; 5-aminolevulinate from L-glutamyl-tRNA(Glu): step 1/2. Catalyzes the NADPH-dependent reduction of glutamyl-tRNA(Glu) to glutamate 1-semialdehyde (GSA). This is Glutamyl-tRNA reductase from Vesicomyosocius okutanii subsp. Calyptogena okutanii (strain HA).